Consider the following 156-residue polypeptide: SsrA-binding protein (156 aa).

The segment covering 135–150 has biased composition (basic and acidic residues); sequence KRDTIKDREWQRDRSR. A disordered region spans residues 135-156; sequence KRDTIKDREWQRDRSRIMKKNT.

Belongs to the SmpB family.

It is found in the cytoplasm. Its function is as follows. Required for rescue of stalled ribosomes mediated by trans-translation. Binds to transfer-messenger RNA (tmRNA), required for stable association of tmRNA with ribosomes. tmRNA and SmpB together mimic tRNA shape, replacing the anticodon stem-loop with SmpB. tmRNA is encoded by the ssrA gene; the 2 termini fold to resemble tRNA(Ala) and it encodes a 'tag peptide', a short internal open reading frame. During trans-translation Ala-aminoacylated tmRNA acts like a tRNA, entering the A-site of stalled ribosomes, displacing the stalled mRNA. The ribosome then switches to translate the ORF on the tmRNA; the nascent peptide is terminated with the 'tag peptide' encoded by the tmRNA and targeted for degradation. The ribosome is freed to recommence translation, which seems to be the essential function of trans-translation. This is SsrA-binding protein from Legionella pneumophila (strain Corby).